Consider the following 200-residue polypeptide: Recombination protein RecR (200 aa).

A C4-type zinc finger spans residues 59–74 (CEKCNTFTEAQVCEVC). Residues 82 to 177 (ALLCVVETPA…AVTRLARGVP (96 aa)) enclose the Toprim domain.

It belongs to the RecR family.

Its function is as follows. May play a role in DNA repair. It seems to be involved in an RecBC-independent recombinational process of DNA repair. It may act with RecF and RecO. This chain is Recombination protein RecR, found in Burkholderia pseudomallei (strain 1106a).